The sequence spans 200 residues: 3-isopropylmalate dehydratase small subunit (200 aa).

Belongs to the LeuD family. LeuD type 1 subfamily. In terms of assembly, heterodimer of LeuC and LeuD.

It catalyses the reaction (2R,3S)-3-isopropylmalate = (2S)-2-isopropylmalate. The protein operates within amino-acid biosynthesis; L-leucine biosynthesis; L-leucine from 3-methyl-2-oxobutanoate: step 2/4. Catalyzes the isomerization between 2-isopropylmalate and 3-isopropylmalate, via the formation of 2-isopropylmaleate. The protein is 3-isopropylmalate dehydratase small subunit of Vibrio atlanticus (strain LGP32) (Vibrio splendidus (strain Mel32)).